Reading from the N-terminus, the 428-residue chain is Bacteriochlorophyll synthase 44.5 kDa chain (428 aa).

12 helical membrane passes run 3–23 (LGWL…AVVV), 32–52 (LMVV…ALHY), 73–93 (FFVI…AVAV), 115–135 (GFGV…ATEP), 144–164 (ITWL…GHFL), 172–192 (LLWI…LAVW), 225–245 (AFTF…LILE), 269–289 (GVFF…IGSL), 291–311 (GWVV…VALG), 317–337 (ALVP…VAAI), 358–378 (LWGA…AGAA), and 393–413 (LVFG…TGVV).

This sequence belongs to the PucC family.

The protein localises to the membrane. It participates in porphyrin-containing compound metabolism; bacteriochlorophyll biosynthesis (light-independent). This Rhodobacter capsulatus (strain ATCC BAA-309 / NBRC 16581 / SB1003) protein is Bacteriochlorophyll synthase 44.5 kDa chain.